We begin with the raw amino-acid sequence, 206 residues long: Small ribosomal subunit protein uS4 (206 aa).

One can recognise an S4 RNA-binding domain in the interval 96-156 (TRLDNVVYRM…EKSKKQARII (61 aa)).

It belongs to the universal ribosomal protein uS4 family. As to quaternary structure, part of the 30S ribosomal subunit. Contacts protein S5. The interaction surface between S4 and S5 is involved in control of translational fidelity.

In terms of biological role, one of the primary rRNA binding proteins, it binds directly to 16S rRNA where it nucleates assembly of the body of the 30S subunit. Its function is as follows. With S5 and S12 plays an important role in translational accuracy. The polypeptide is Small ribosomal subunit protein uS4 (Shewanella woodyi (strain ATCC 51908 / MS32)).